Here is a 151-residue protein sequence, read N- to C-terminus: Cytochrome c-type biogenesis protein CcmE (151 aa).

Topologically, residues 1-8 (MNPQRKKR) are cytoplasmic. Residues 9 to 29 (LFLILGLLAGVAVAVGFALSA) traverse the membrane as a helical; Signal-anchor for type II membrane protein segment. Over 30 to 151 (LQQNINLFYT…QAASGAEAKP (122 aa)) the chain is Periplasmic. H124 and Y128 together coordinate heme.

This sequence belongs to the CcmE/CycJ family.

The protein localises to the cell inner membrane. Functionally, heme chaperone required for the biogenesis of c-type cytochromes. Transiently binds heme delivered by CcmC and transfers the heme to apo-cytochromes in a process facilitated by CcmF and CcmH. This Pseudomonas putida (strain W619) protein is Cytochrome c-type biogenesis protein CcmE.